Reading from the N-terminus, the 2804-residue chain is Nipped-B-like protein (2804 aa).

2 stretches are compositionally biased toward polar residues: residues 128 to 173 and 191 to 208; these read LSQN…QNSP and HPSS…SVSS. The disordered stretch occupies residues 128–340; that stretch reads LSQNSMHSSP…LGKDEKEQSE (213 aa). Phosphoserine occurs at positions 150 and 162. The span at 234-249 shows a compositional bias: basic and acidic residues; sequence HHADNPRHGSSEDYLH. Residues Ser243, Ser256, Ser274, Ser280, Ser284, Ser301, Ser306, and Ser318 each carry the phosphoserine modification. A compositionally biased stretch (basic and acidic residues) spans 331–340; it reads LGKDEKEQSE. Phosphoserine is present on Ser350. Over residues 482–500 the composition is skewed to basic and acidic residues; sequence RESAIERERFSKEVQDKDK. Residues 482 to 946 form a disordered region; it reads RESAIERERF…NKAEFPSYLL (465 aa). The segment covering 523 to 534 has biased composition (polar residues); it reads PASQETGSTGNG. Composition is skewed to basic and acidic residues over residues 562–572, 593–663, 672–685, and 694–939; these read DSIKKPEEIKQ, PENH…ECKQ, KQNE…KPND, and ETTK…DNKA. A phosphothreonine mark is found at Thr713 and Thr746. Ser912 is subject to Phosphoserine. Residues 996 to 1009 carry the PxVxL motif motif; the sequence is NKGAKPVVVLQKLS. 2 disordered regions span residues 1017–1047 and 1060–1191; these read IKDR…DQSV and ESTM…LTPE. At Lys1082 the chain carries N6-acetyllysine. 3 positions are modified to phosphoserine: Ser1089, Ser1090, and Ser1096. The span at 1089–1100 shows a compositional bias: acidic residues; sequence SSDEDNDSDEAF. Residues 1109–1139 are compositionally biased toward basic and acidic residues; it reads KDDDKAWEYEERDRRSSGDHRRSGHSHEGRR. Residues Ser1150, Ser1152, and Ser1154 each carry the phosphoserine modification. At Tyr1159 the chain carries Phosphotyrosine. Ser1160 carries the post-translational modification Phosphoserine. Residues 1171-1182 show a composition bias toward basic residues; the sequence is KMKKKEKQKKRK. Thr1189 bears the Phosphothreonine mark. Ser1197 carries the post-translational modification Phosphoserine. The segment at 1691–1710 is disordered; sequence AMKSQKDEESSEGTHHAKEI. 5 HEAT repeats span residues 1767-1805, 1843-1881, 1945-1984, 2227-2267, and 2313-2351; these read AQSF…VDPS, PQLA…EQPT, YDWF…HILK, VNLK…LKEM, and LIHP…KYAG. Positions 2473–2489 are enriched in basic and acidic residues; that stretch reads VKDKRKERKSSPSKENE. Disordered stretches follow at residues 2473 to 2520 and 2651 to 2696; these read VKDK…DDIN and TSLL…DSTE. Residues Ser2493, Ser2509, Ser2511, Ser2513, Ser2515, Ser2652, and Ser2658 each carry the phosphoserine modification. Over residues 2510-2519 the composition is skewed to acidic residues; it reads DSDSDSEDDI. Thr2667 is subject to Phosphothreonine. Ser2672 is modified (phosphoserine).

It belongs to the SCC2/Nipped-B family. As to quaternary structure, heterodimerizes with MAU2/SCC4 to form the cohesin loading complex. The NIPBL-MAU2 heterodimer interacts with the cohesin complex composed of SMC1A/B and SMC3 heterodimer, RAD21 and STAG1/SA1. NIPBL directly contacts all members of the complex, RAD21, SMC1A/B, SMC3 and STAG1. Interacts directly (via PxVxL motif) with CBX5. Interacts with ZNF609 (via N-terminus). Interacts with the multiprotein complex Integrator. Interacts (via PxVxL motif) with CBX3. Interacts with BRD4. As to expression, widely expressed. Highly expressed in heart, skeletal muscle, fetal and adult liver, fetal and adult kidney. Expressed at intermediates level in thymus, placenta, peripheral leukocyte and small intestine. Weakly or not expressed in brain, colon, spleen and lung.

Its subcellular location is the nucleus. It localises to the chromosome. Plays an important role in the loading of the cohesin complex on to DNA. Forms a heterodimeric complex (also known as cohesin loading complex) with MAU2/SCC4 which mediates the loading of the cohesin complex onto chromatin. Plays a role in cohesin loading at sites of DNA damage. Its recruitment to double-strand breaks (DSBs) sites occurs in a CBX3-, RNF8- and RNF168-dependent manner whereas its recruitment to UV irradiation-induced DNA damage sites occurs in a ATM-, ATR-, RNF8- and RNF168-dependent manner. Along with ZNF609, promotes cortical neuron migration during brain development by regulating the transcription of crucial genes in this process. Preferentially binds promoters containing paused RNA polymerase II. Up-regulates the expression of SEMA3A, NRP1, PLXND1 and GABBR2 genes, among others. The chain is Nipped-B-like protein (NIPBL) from Homo sapiens (Human).